The chain runs to 89 residues: Calsenilin isoform 4 (89 aa).

The interval 27 to 57 is disordered; it reads SSRDAEDQGSREGIGWQPPGRSWAHTTEQEG.

As to expression, isoform 1 or isoform 4 (T+ forms) are expressed at equal levels with isoform 2 or isoform 3 (T- forms) in brain.

Functionally, unknown for isoform 4. Csen is involved in calcium-dependent transcriptional repression, regulation of potassium channels, and perhaps in processing of PSEN2 and apoptosis. This Mus musculus (Mouse) protein is Calsenilin isoform 4 (Kcnip3).